The chain runs to 1173 residues: RNA polymerase-associated protein CTR9 homolog (1173 aa).

TPR repeat units follow at residues 41 to 75 (LHIWIALALEYYKQGKTEEFVKLLEAARIDGNLDY), 129 to 162 (NHLLGRACFCLLEGDKMDQADAQFHFVLNQSPNN), 163 to 196 (IPALLGKACISFNKKDYRGALAYYKKALRTNPGC), 198 to 231 (AEVRLGMGHCFVKLNKLEKARLAFSRALELNSKC), 235 to 268 (LVGLAVLELNNKEADSIKNGVQLLSRAYTIDPSN), 306 to 339 (AESCYQLARSFHVQEDYDQAFQYYYQATQFASSS), 341 to 374 (VLPFFGLGQMYIYRGDKENASQCFEKVLKAYPNN), 412 to 444 (VEAWIELAQILEQTDIQGALSAYGTATRILQEK), 451 to 484 (PEILNNVGALHFRLGNLGEAKKYFLASLDRAKAE), 497 to 530 (VTTSYNLARLYEAMCEFHEAEKLYKNILREHPNY), 531 to 564 (VDCYLRLGAMARDKGNFYEASDWFKEALQINQDH), 566 to 598 (DAWSLIGNLHLAKQEWGPGQKKFERILKQPSTQ), 613 to 646 (QTLHQPTRDREKEKRHQDRALAIYKQVLRNDAKN), 647 to 680 (LYAANGIGAVLAHKGYFREARDVFAQVREATADI), 681 to 714 (SDVWLNLAHIYVEQKQYISAVQMYENCLRKFYKH), and 717 to 750 (TEVVLYLARALFKCGKLQECKQTLLKARHVAPSD). The segment at 892-1173 (TGETEATKEK…GSEHGSDDSD (282 aa)) is disordered. Residues 900–912 (EKKRGGGGGRRSK) are compositionally biased toward basic residues. The segment covering 917 to 929 (FDEFVNDDTDDDL) has biased composition (acidic residues). Threonine 925 is modified (phosphothreonine). 3 positions are modified to phosphoserine: serine 932, serine 941, and serine 943. Basic residues predominate over residues 955 to 964 (RKKKKRRRHP). A Phosphoserine modification is found at serine 970. Positions 980-994 (KPKKRRPPKAEKKKA) are enriched in basic residues. Phosphoserine occurs at positions 1020 and 1021. The span at 1023–1034 (EDKLKIADEGHP) shows a compositional bias: basic and acidic residues. Phosphoserine occurs at positions 1039, 1041, 1043, 1081, 1085, 1087, 1097, and 1102. Residues 1098–1128 (GSEQSDNESVQSGRSHSGVSENDSRPASPSA) show a composition bias toward polar residues. The segment covering 1129 to 1139 (ESDHESERGSD) has biased composition (basic and acidic residues). Residues 1148–1159 (GNESEPEGSNNE) show a composition bias toward low complexity. Basic and acidic residues predominate over residues 1160–1173 (ASDRGSEHGSDDSD).

Component of the PAF1 complex, which consists of CDC73, PAF1, LEO1, CTR9, RTF1 and SKIC8. The PAF1 complex interacts with PHF5A. Interacts with KMT2A/MLL1. Interacts with STAT3. Interacts with SETD5. Interacts with ERCC6. As to quaternary structure, (Microbial infection) The PAF1 complex interacts with Zika virus French Polynesia 10087PF/2013 non-structural protein 5/NS5. The interaction with viral NS5 proteins may reduce the antiviral immune response by inhibiting the recruitment of the PAF1 complex to interferon-stimulated genes, thus preventing their transcription. In terms of assembly, (Microbial infection) The PAF1 complex interacts with Dengue virus DENV2 16681 non-structural protein 5/NS5. The PAF1 complex interacts with Dengue virus DENV4 Dominica/814669/1981 non-structural protein 5/NS5. The interaction with viral NS5 proteins may reduce the antiviral immune response by inhibiting the recruitment of the PAF1 complex to interferon-stimulated genes, thus preventing their transcription. As to expression, widely expressed.

It is found in the nucleus speckle. Functionally, component of the PAF1 complex (PAF1C) which has multiple functions during transcription by RNA polymerase II and is implicated in regulation of development and maintenance of embryonic stem cell pluripotency. PAF1C associates with RNA polymerase II through interaction with POLR2A CTD non-phosphorylated and 'Ser-2'- and 'Ser-5'-phosphorylated forms and is involved in transcriptional elongation, acting both independently and synergistically with TCEA1 and in cooperation with the DSIF complex and HTATSF1. PAF1C is required for transcription of Hox and Wnt target genes. PAF1C is involved in hematopoiesis and stimulates transcriptional activity of KMT2A/MLL1; it promotes leukemogenesis through association with KMT2A/MLL1-rearranged oncoproteins, such as KMT2A/MLL1-MLLT3/AF9 and KMT2A/MLL1-MLLT1/ENL. PAF1C is involved in histone modifications such as ubiquitination of histone H2B and methylation on histone H3 'Lys-4' (H3K4me3). PAF1C recruits the RNF20/40 E3 ubiquitin-protein ligase complex and the E2 enzyme UBE2A or UBE2B to chromatin which mediate monoubiquitination of 'Lys-120' of histone H2B (H2BK120ub1); UB2A/B-mediated H2B ubiquitination is proposed to be coupled to transcription. PAF1C is involved in mRNA 3' end formation probably through association with cleavage and poly(A) factors. In case of infection by influenza A strain H3N2, PAF1C associates with viral NS1 protein, thereby regulating gene transcription. Required for mono- and trimethylation on histone H3 'Lys-4' (H3K4me3) and dimethylation on histone H3 'Lys-79' (H3K4me3). Required for Hox gene transcription. Required for the trimethylation of histone H3 'Lys-4' (H3K4me3) on genes involved in stem cell pluripotency; this function is synergistic with CXXC1 indicative for an involvement of the SET1 complex. Involved in transcriptional regulation of IL6-responsive genes and in JAK-STAT pathway; may regulate DNA-association of STAT3. The polypeptide is RNA polymerase-associated protein CTR9 homolog (CTR9) (Homo sapiens (Human)).